Consider the following 322-residue polypeptide: GTP 3',8-cyclase (322 aa).

The Radical SAM core domain maps to 4–229 (NFNRNIDYLR…IPVQMKKSGP (226 aa)). GTP is bound at residue Arg-13. [4Fe-4S] cluster-binding residues include Cys-20 and Cys-24. Tyr-26 contributes to the S-adenosyl-L-methionine binding site. Cys-27 contacts [4Fe-4S] cluster. Arg-64 serves as a coordination point for GTP. Residue Gly-68 participates in S-adenosyl-L-methionine binding. Thr-95 provides a ligand contact to GTP. S-adenosyl-L-methionine is bound at residue Ser-119. Position 156 (Lys-156) interacts with GTP. Met-190 is an S-adenosyl-L-methionine binding site. Positions 253 and 256 each coordinate [4Fe-4S] cluster. Residue 258–260 (RLR) participates in GTP binding. A [4Fe-4S] cluster-binding site is contributed by Cys-270.

The protein belongs to the radical SAM superfamily. MoaA family. In terms of assembly, monomer and homodimer. The cofactor is [4Fe-4S] cluster.

The catalysed reaction is GTP + AH2 + S-adenosyl-L-methionine = (8S)-3',8-cyclo-7,8-dihydroguanosine 5'-triphosphate + 5'-deoxyadenosine + L-methionine + A + H(+). Its pathway is cofactor biosynthesis; molybdopterin biosynthesis. Its function is as follows. Catalyzes the cyclization of GTP to (8S)-3',8-cyclo-7,8-dihydroguanosine 5'-triphosphate. This chain is GTP 3',8-cyclase, found in Thermodesulfovibrio yellowstonii (strain ATCC 51303 / DSM 11347 / YP87).